A 349-amino-acid polypeptide reads, in one-letter code: Draxin (349 aa).

A signal peptide spans 1–25 (MAASSTFFSPSLFLCVLVLIDITLA). Residues 40–53 (NHLQNQETWPQQPR) show a composition bias toward polar residues. 3 disordered regions span residues 40–63 (NHLQ…HGLA), 119–166 (PHAE…LYKK), and 246–273 (WPSA…EGEP). The span at 54 to 63 (SGHHHKHGLA) shows a compositional bias: basic residues. The span at 119–139 (PHAERENQSPGSERGKKQNRE) shows a compositional bias: basic and acidic residues. 2 stretches are compositionally biased toward basic residues: residues 140–155 (QRRH…HRGK) and 249–258 (AKKKEKRRSK). The N-linked (GlcNAc...) asparagine glycan is linked to asparagine 264.

Belongs to the draxin family.

Its subcellular location is the secreted. Chemorepulsive axon guidance protein required for the development of spinal cord and forebrain commissures. Acts as a chemorepulsive guidance protein for commissural axons during development. Able to inhibit or repel neurite outgrowth from dorsal spinal cord and cortical explants in vitro. Binds directly to the neurites and growth cones. This is Draxin from Gallus gallus (Chicken).